The following is a 523-amino-acid chain: ATP synthase subunit beta, mitochondrial (523 aa).

A mitochondrion-targeting transit peptide spans 1–19; sequence MFSRVAKTSFSAVRAAKSQ. 201–208 provides a ligand contact to ATP; it reads GGAGVGKT.

Belongs to the ATPase alpha/beta chains family. F-type ATPases have 2 components, CF(1) - the catalytic core - and CF(0) - the membrane proton channel. CF(1) has five subunits: alpha(3), beta(3), gamma(1), delta(1), epsilon(1). CF(0) has three main subunits: a, b and c.

Its subcellular location is the mitochondrion. It is found in the mitochondrion inner membrane. It carries out the reaction ATP + H2O + 4 H(+)(in) = ADP + phosphate + 5 H(+)(out). Functionally, mitochondrial membrane ATP synthase (F(1)F(0) ATP synthase or Complex V) produces ATP from ADP in the presence of a proton gradient across the membrane which is generated by electron transport complexes of the respiratory chain. F-type ATPases consist of two structural domains, F(1) - containing the extramembraneous catalytic core, and F(0) - containing the membrane proton channel, linked together by a central stalk and a peripheral stalk. During catalysis, ATP synthesis in the catalytic domain of F(1) is coupled via a rotary mechanism of the central stalk subunits to proton translocation. Subunits alpha and beta form the catalytic core in F(1). Rotation of the central stalk against the surrounding alpha(3)beta(3) subunits leads to hydrolysis of ATP in three separate catalytic sites on the beta subunits. This is ATP synthase subunit beta, mitochondrial from Hemicentrotus pulcherrimus (Sea urchin).